The chain runs to 486 residues: Ribosomal RNA small subunit methyltransferase F (486 aa).

S-adenosyl-L-methionine is bound by residues 124–130, glutamate 148, aspartate 175, and aspartate 193; that span reads ASAPGSK. Catalysis depends on cysteine 246, which acts as the Nucleophile.

This sequence belongs to the class I-like SAM-binding methyltransferase superfamily. RsmB/NOP family.

Its subcellular location is the cytoplasm. The catalysed reaction is cytidine(1407) in 16S rRNA + S-adenosyl-L-methionine = 5-methylcytidine(1407) in 16S rRNA + S-adenosyl-L-homocysteine + H(+). Specifically methylates the cytosine at position 1407 (m5C1407) of 16S rRNA. The protein is Ribosomal RNA small subunit methyltransferase F of Shewanella putrefaciens (strain CN-32 / ATCC BAA-453).